Consider the following 120-residue polypeptide: Large ribosomal subunit protein eL8 (120 aa).

The protein belongs to the eukaryotic ribosomal protein eL8 family. In terms of assembly, part of the 50S ribosomal subunit. Probably part of the RNase P complex.

Its subcellular location is the cytoplasm. In terms of biological role, multifunctional RNA-binding protein that recognizes the K-turn motif in ribosomal RNA, the RNA component of RNase P, box H/ACA, box C/D and box C'/D' sRNAs. The chain is Large ribosomal subunit protein eL8 from Haloquadratum walsbyi (strain DSM 16790 / HBSQ001).